A 121-amino-acid polypeptide reads, in one-letter code: Small ribosomal subunit protein uS13 (121 aa).

The segment at 95–121 is disordered; sequence LPVRGQNTKNNARTRKGKAVAIAGKKK. The span at 106-121 shows a compositional bias: basic residues; sequence ARTRKGKAVAIAGKKK.

The protein belongs to the universal ribosomal protein uS13 family. In terms of assembly, part of the 30S ribosomal subunit. Forms a loose heterodimer with protein S19. Forms two bridges to the 50S subunit in the 70S ribosome.

Located at the top of the head of the 30S subunit, it contacts several helices of the 16S rRNA. In the 70S ribosome it contacts the 23S rRNA (bridge B1a) and protein L5 of the 50S subunit (bridge B1b), connecting the 2 subunits; these bridges are implicated in subunit movement. Contacts the tRNAs in the A and P-sites. The polypeptide is Small ribosomal subunit protein uS13 (Streptococcus equi subsp. zooepidemicus (strain H70)).